Here is a 201-residue protein sequence, read N- to C-terminus: MSRYRGPRFKKIRRLGALPGLTSKRPKAGSDLRNQSRSVKKSQYRIRLEEKQKLRFHYGLTEHQLLKYVRIAGKAKGSTGQVLLQLLEMRLDNILFRLGMALTIPQARQLVNHGHILVNGRIVDIPSYRCKPRDIITVKDEQNSRTLVQNLLDSSAPEELPNHLTLHTFQYEGLVNQIIDRKCVGLKINELLVVEYYSRQT.

Positions 89–152 (MRLDNILFRL…NSRTLVQNLL (64 aa)) constitute an S4 RNA-binding domain.

Belongs to the universal ribosomal protein uS4 family. Part of the 30S ribosomal subunit. Contacts protein S5. The interaction surface between S4 and S5 is involved in control of translational fidelity.

It is found in the plastid. The protein localises to the chloroplast. In terms of biological role, one of the primary rRNA binding proteins, it binds directly to 16S rRNA where it nucleates assembly of the body of the 30S subunit. Functionally, with S5 and S12 plays an important role in translational accuracy. This chain is Small ribosomal subunit protein uS4c (rps4), found in Arabidopsis thaliana (Mouse-ear cress).